An 838-amino-acid polypeptide reads, in one-letter code: Phosphatidylethanolamine N-methyltransferase 1 (838 aa).

Topologically, residues 1 to 48 are lumenal; the sequence is MATEIITEKKEIVARTRSSGITFNPPVTHDMVRSLFDPTIKKSFLECC. Residues 49–69 traverse the membrane as a helical segment; sequence ITLTILANFVLCYYLINWFGL. The Cytoplasmic segment spans residues 70–73; sequence SQAK. A helical membrane pass occupies residues 74–94; that stretch reads LIFLIQYVYWRLAYNLGIGII. Residues 95–157 lie on the Lumenal side of the membrane; the sequence is LHYQSHYESL…ELNCWLLFRQ (63 aa). Residues 158–178 traverse the membrane as a helical segment; sequence FVDLILMQDFTTYIIYVYLSL. Over 179 to 184 the chain is Cytoplasmic; that stretch reads PTDVSS. Residues 185–205 form a helical membrane-spanning segment; that stretch reads LINWKSLIGIAMILFNIWVKI. The Lumenal segment spans residues 206–236; it reads DAHRVVKDYAWYWGDFFFLQDAELTFDGVFN. A helical transmembrane segment spans residues 237–257; that stretch reads ISPHPMYSIGYLGYYGLSLIC. At 258–261 the chain is on the cytoplasmic side; the sequence is GDYR. The chain crosses the membrane as a helical span at residues 262-282; sequence VLLVSVGGHFLQFLFLKYVES. Topologically, residues 283–328 are lumenal; that stretch reads PHIERTYGSDSPSNSTQHQIDDLIAKENYDYSRPLINTGILFENFQ. Residues 329–349 form a helical membrane-spanning segment; the sequence is FLRFSDYFTVSTILVLFSWFF. Residues 350–356 lie on the Cytoplasmic side of the membrane; that stretch reads TSKPSNN. The helical transmembrane segment at 357–377 threads the bilayer; that stretch reads FLFVLTLLTKLTTWLLTSWIL. Residues 378–403 lie on the Lumenal side of the membrane; that stretch reads FQQSNRKWFTRLFLKNGYTQIYSYQQ. The helical transmembrane segment at 404 to 424 threads the bilayer; that stretch reads WQFLYNYSLIVTNTLLFLHTL. The Cytoplasmic segment spans residues 425-435; it reads SELYSIQSSDG. The chain crosses the membrane as a helical span at residues 436 to 456; sequence LNNSHVIFGLLLCAIQIWCNV. The Lumenal portion of the chain corresponds to 457-517; the sequence is ETRDAISDFG…VLMTNFSKTN (61 aa). The helical transmembrane segment at 518–538 threads the bilayer; that stretch reads VTLAVLWTVTNLIFVKLIEEP. At 539 to 838 the chain is on the cytoplasmic side; sequence HVSKVYGNGT…DIKEVLDSLN (300 aa).

This sequence belongs to the class VI-like SAM-binding methyltransferase superfamily. CHO2 family.

It is found in the endoplasmic reticulum membrane. It carries out the reaction a 1,2-diacyl-sn-glycero-3-phosphoethanolamine + S-adenosyl-L-methionine = a 1,2-diacyl-sn-glycero-3-phospho-N-methylethanolamine + S-adenosyl-L-homocysteine + H(+). It participates in phospholipid metabolism; phosphatidylcholine biosynthesis. Catalyzes the first step of the methylation pathway of phosphatidylcholine biosynthesis, the SAM-dependent methylation of phosphatidylethanolamine (PE) to phosphatidylmonomethylethanolamine (PMME). The protein is Phosphatidylethanolamine N-methyltransferase 1 (CHO2-1) of Vanderwaltozyma polyspora (strain ATCC 22028 / DSM 70294 / BCRC 21397 / CBS 2163 / NBRC 10782 / NRRL Y-8283 / UCD 57-17) (Kluyveromyces polysporus).